The sequence spans 435 residues: Nuclear hormone receptor family member nhr-136 (435 aa).

The nuclear receptor DNA-binding region spans 50 to 129 (PSNCKVCRHS…AGMNPSAIQA (80 aa)). 2 NR C4-type zinc fingers span residues 53 to 73 (CKVC…CNGC) and 89 to 112 (CLKM…CRAC). One can recognise an NR LBD domain in the interval 194–430 (RDIRKLDELI…RYTRISNLYE (237 aa)).

The protein belongs to the nuclear hormone receptor family.

The protein resides in the nucleus. Its function is as follows. Orphan nuclear receptor. This chain is Nuclear hormone receptor family member nhr-136 (nhr-136), found in Caenorhabditis elegans.